A 235-amino-acid polypeptide reads, in one-letter code: Ribonuclease 3 (235 aa).

Residues 6–131 (IDQLERLTEH…LIAVMYLDGG (126 aa)) enclose the RNase III domain. Glu-44 is a Mg(2+) binding site. Residue Asp-48 is part of the active site. Residues Asp-117 and Glu-120 each coordinate Mg(2+). Residue Glu-120 is part of the active site. Residues 156 to 225 (DAKTELQEWA…AEKVLRREGI (70 aa)) enclose the DRBM domain.

It belongs to the ribonuclease III family. As to quaternary structure, homodimer. Mg(2+) serves as cofactor.

Its subcellular location is the cytoplasm. The catalysed reaction is Endonucleolytic cleavage to 5'-phosphomonoester.. Its function is as follows. Digests double-stranded RNA. Involved in the processing of primary rRNA transcript to yield the immediate precursors to the large and small rRNAs (23S and 16S). Processes some mRNAs, and tRNAs when they are encoded in the rRNA operon. Processes pre-crRNA and tracrRNA of type II CRISPR loci if present in the organism. This chain is Ribonuclease 3, found in Bartonella quintana (strain Toulouse) (Rochalimaea quintana).